The primary structure comprises 103 residues: Large ribosomal subunit protein bL21 (103 aa).

Belongs to the bacterial ribosomal protein bL21 family. Part of the 50S ribosomal subunit. Contacts protein L20.

This protein binds to 23S rRNA in the presence of protein L20. This Burkholderia ambifaria (strain MC40-6) protein is Large ribosomal subunit protein bL21.